We begin with the raw amino-acid sequence, 142 residues long: Large ribosomal subunit protein uL13 (142 aa).

The protein belongs to the universal ribosomal protein uL13 family. As to quaternary structure, part of the 50S ribosomal subunit.

Its function is as follows. This protein is one of the early assembly proteins of the 50S ribosomal subunit, although it is not seen to bind rRNA by itself. It is important during the early stages of 50S assembly. The sequence is that of Large ribosomal subunit protein uL13 from Pseudoalteromonas translucida (strain TAC 125).